The sequence spans 166 residues: 3-isopropylmalate dehydratase small subunit (166 aa).

The protein belongs to the LeuD family. LeuD type 2 subfamily. Heterodimer of LeuC and LeuD.

It carries out the reaction (2R,3S)-3-isopropylmalate = (2S)-2-isopropylmalate. It functions in the pathway amino-acid biosynthesis; L-leucine biosynthesis; L-leucine from 3-methyl-2-oxobutanoate: step 2/4. Its function is as follows. Catalyzes the isomerization between 2-isopropylmalate and 3-isopropylmalate, via the formation of 2-isopropylmaleate. The protein is 3-isopropylmalate dehydratase small subunit of Heliobacterium modesticaldum (strain ATCC 51547 / Ice1).